The sequence spans 110 residues: MKVTGYYVIVAALLALALRAGPSLAADDRNQDCGPATSDPRANLNGADKAHSAEHTQDFNCQDTPAEEGECYECVLPPEVRIEGAEVIDVADRNFYPRKTLLLARMIRHH.

Residues 1-25 form the signal peptide; the sequence is MKVTGYYVIVAALLALALRAGPSLA. Residues 27–64 are disordered; it reads DDRNQDCGPATSDPRANLNGADKAHSAEHTQDFNCQDT. Over residues 48 to 57 the composition is skewed to basic and acidic residues; sequence DKAHSAEHTQ.

It localises to the periplasm. This Rhizobium leguminosarum bv. phaseoli protein is Nodulation protein NolE (nolE).